We begin with the raw amino-acid sequence, 274 residues long: NH(3)-dependent NAD(+) synthetase (274 aa).

Residue 46–53 participates in ATP binding; it reads GISGGQDS. Aspartate 52 serves as a coordination point for Mg(2+). Deamido-NAD(+) is bound at residue arginine 140. ATP is bound at residue threonine 160. Glutamate 165 contacts Mg(2+). Deamido-NAD(+)-binding residues include lysine 173 and aspartate 180. 2 residues coordinate ATP: lysine 189 and threonine 211. 260-261 is a binding site for deamido-NAD(+); the sequence is HK.

The protein belongs to the NAD synthetase family. In terms of assembly, homodimer.

It carries out the reaction deamido-NAD(+) + NH4(+) + ATP = AMP + diphosphate + NAD(+) + H(+). It participates in cofactor biosynthesis; NAD(+) biosynthesis; NAD(+) from deamido-NAD(+) (ammonia route): step 1/1. Functionally, catalyzes the ATP-dependent amidation of deamido-NAD to form NAD. Uses ammonia as a nitrogen source. The sequence is that of NH(3)-dependent NAD(+) synthetase from Streptococcus gordonii (strain Challis / ATCC 35105 / BCRC 15272 / CH1 / DL1 / V288).